The primary structure comprises 716 residues: Astellifadiene synthase (716 aa).

The segment at 1–323 (MEFKYSTLID…SPRYYTDAKF (323 aa)) is terpene cyclase. Residue Asp92 participates in Mg(2+) binding. Substrate contacts are provided by residues Asp92, 179–182 (RIYD), Asn223, 227–231 (SWEKE), and 316–317 (RY). A DDXXD 1 motif is present at residues 92-96 (DDVID). The NSE/DTE motif lies at 223–231 (NDLVSWEKE). Residues 324 to 713 (SQRQLDWIKN…FQLKLILQFL (390 aa)) are prenyltransferase. Residues Lys436, Arg439, and His468 each contribute to the isopentenyl diphosphate site. The Mg(2+) site is built by Asp475 and Asp479. Positions 475-479 (DDVED) match the DDXXD 2 motif. Arg484 lines the dimethylallyl diphosphate pocket. Arg485 serves as a coordination point for isopentenyl diphosphate. Positions 562, 563, 598, 605, 615, and 625 each coordinate dimethylallyl diphosphate.

This sequence in the N-terminal section; belongs to the terpene synthase family. The protein in the C-terminal section; belongs to the FPP/GGPP synthase family. As to quaternary structure, hexamer. The cofactor is Mg(2+).

It carries out the reaction isopentenyl diphosphate + (2E,6E)-farnesyl diphosphate = (2E,6E,10E)-geranylgeranyl diphosphate + diphosphate. The catalysed reaction is isopentenyl diphosphate + (2E,6E,10E)-geranylgeranyl diphosphate = (2E,6E,10E,14E)-geranylfarnesyl diphosphate + diphosphate. It catalyses the reaction (2E,6E,10E,14E)-geranylfarnesyl diphosphate = astellifadiene + diphosphate. The protein operates within secondary metabolite biosynthesis; terpenoid biosynthesis. Its function is as follows. Bifunctional terpene synthase that converts dimethylallyl diphosphate (DMAPP) and isopentenyl diphosphate (IPP) into astellifadiene. The C-terminal prenyltransferase (PT) domain of EvAS catalyzes formation of geranylfarnesyl pyrophosphate (GFPP), whereas the N-terminal terpene cyclase (TC) domain catalyzes the cyclization of GFPP to astellifadiene. This is Astellifadiene synthase from Emericella variicolor (Aspergillus stellatus).